The chain runs to 489 residues: Capsid protein (489 aa).

The disordered stretch occupies residues 79 to 144 (GETSEEESDS…QPKTIPGQKQ (66 aa)). The span at 81-94 (TSEEESDSGEEPEF) shows a compositional bias: acidic residues. Residues 95-110 (EQVRMDRTGGTEIPKE) show a composition bias toward basic and acidic residues. Residues 122–125 (RKRK) carry the Nuclear localization signal motif. Residues 135 to 144 (QPKTIPGQKQ) are compositionally biased toward polar residues. Residues 412–429 (CRCWICNIEGHYANECPN) form a CCHC-type zinc finger. The interval 467 to 489 (EEEEETSTEESDGSSTSEDSDSD) is disordered.

The protein belongs to the caulimoviridae capsid protein family. Interacts (via nuclear localization signal) with host importin alpha.

The protein resides in the virion. It is found in the host nucleus. In terms of biological role, self assembles to form an icosahedral capsid, about 50 nm in diameter, nm, composed of 420 subunits of the viral capsid protein. The capsid encapsulates the genomic dsDNA. Following virus entry into host cell, provides nuclear import of the viral genome. Virus particles do not enter the nucleus, but dock at the nuclear membrane through the interaction with host importins. The sequence is that of Capsid protein from Arabidopsis thaliana (Mouse-ear cress).